Consider the following 252-residue polypeptide: uncharacterized protein (252 aa).

It belongs to the methyltransferase superfamily.

This is an uncharacterized protein from Mycobacterium sp. (strain JLS).